A 345-amino-acid polypeptide reads, in one-letter code: Myb/SANT-like DNA-binding domain-containing protein 4 (345 aa).

The Myb-like domain occupies 4-77; it reads LKRKRKSNFS…EVKRRYLDWR (74 aa). Lys-9 is covalently cross-linked (Glycyl lysine isopeptide (Lys-Gly) (interchain with G-Cter in SUMO2)). A Phosphoserine modification is found at Ser-106. Glycyl lysine isopeptide (Lys-Gly) (interchain with G-Cter in SUMO2) cross-links involve residues Lys-114 and Lys-142. The tract at residues 141 to 175 is disordered; the sequence is VKVEEEERDPQSPEFEIEEEEEMLSSVIPDSRREN. Position 188 is a phosphothreonine (Thr-188). A coiled-coil region spans residues 202 to 344; it reads HLLMNIEKQK…RLRIQKEGHL (143 aa). Residues Lys-237, Lys-254, and Lys-273 each participate in a glycyl lysine isopeptide (Lys-Gly) (interchain with G-Cter in SUMO2) cross-link.

The sequence is that of Myb/SANT-like DNA-binding domain-containing protein 4 (Msantd4) from Rattus norvegicus (Rat).